Reading from the N-terminus, the 633-residue chain is MANLDMEQHSSENEEIKKKKHKKRARDEAKKLKQPAMEEEPDHEDGDAKENNALIDEEPKKKKKKKNKKRGDTDDGEDEAVAEEEPKKKKKKNKKLQQRGDTNDEEDEVIAEEEEPKKKKKKQRKDTEAKSEEEEVEDKEEEKKLEETSIMTNKTFESLSLSDNTYKSIKEMGFARMTQIQAKAIPPLMMGEDVLGAARTGSGKTLAFLIPAVELLYRVKFTPRNGTGVLVICPTRELAIQSYGVAKELLKYHSQTVGKVIGGEKRKTEAEILAKGVNLLVATPGRLLDHLENTNGFIFKNLKFLVMDEADRILEQNFEEDLKKILNLLPKTRQTSLFSATQSAKVEDLARVSLTSPVYIDVDEGRKEVTNEGLEQGYCVVPSAMRLLFLLTFLKRFQGKKKIMVFFSTCKSTKFHAELFRYIKFDCLEIRGGIDQNKRTPTFLQFIKAETGILLCTNVAARGLDFPHVDWIVQYDPPDNPTDYIHRVGRTARGEGAKGKALLVLTPQELKFIQYLKAAKIPVEEHEFEEKKLLDVKPFVENLISENYALKESAKEAYKTYISGYDSHSMKDVFNVHQLNLTEVATSFGFSDPPKVALKIDRGGYRSKREPVNKFKRGRGGGRPGGKSKFERY.

Residues 1–17 show a composition bias toward basic and acidic residues; the sequence is MANLDMEQHSSENEEIK. The tract at residues 1–147 is disordered; sequence MANLDMEQHS…DKEEEKKLEE (147 aa). A coiled-coil region spans residues 2-34; sequence ANLDMEQHSSENEEIKKKKHKKRARDEAKKLKQ. 2 stretches are compositionally biased toward acidic residues: residues 37-47 and 74-83; these read MEEEPDHEDGD and DDGEDEAVAE. The span at 88-97 shows a compositional bias: basic residues; that stretch reads KKKKKNKKLQ. Acidic residues-rich tracts occupy residues 103 to 114 and 131 to 140; these read NDEEDEVIAEEE and SEEEEVEDKE. Residues 117 to 153 are a coiled coil; the sequence is KKKKKKQRKDTEAKSEEEEVEDKEEEKKLEETSIMTN. Residues 154 to 182 carry the Q motif motif; it reads KTFESLSLSDNTYKSIKEMGFARMTQIQA. The Helicase ATP-binding domain maps to 185–360; sequence IPPLMMGEDV…RVSLTSPVYI (176 aa). 198–205 lines the ATP pocket; the sequence is ARTGSGKT. The DEAD box motif lies at 308 to 311; it reads DEAD. Residues 386-534 enclose the Helicase C-terminal domain; it reads RLLFLLTFLK…EHEFEEKKLL (149 aa). A disordered region spans residues 608 to 633; the sequence is KREPVNKFKRGRGGGRPGGKSKFERY.

It belongs to the DEAD box helicase family. DDX18/HAS1 subfamily.

The catalysed reaction is ATP + H2O = ADP + phosphate + H(+). This chain is DEAD-box ATP-dependent RNA helicase 27 (RH27), found in Arabidopsis thaliana (Mouse-ear cress).